The sequence spans 424 residues: Glutamyl-tRNA(Gln) amidotransferase subunit D (424 aa).

Positions 56–78 (GETANGSRNGGKGCKTNEEELPE) are disordered. The Asparaginase/glutaminase domain maps to 84-413 (PKIAILSTGG…EKAAGMLRED (330 aa)). Active-site residues include Thr94, Thr170, Asp171, and Lys247.

Belongs to the asparaginase 1 family. GatD subfamily. In terms of assembly, heterodimer of GatD and GatE.

The enzyme catalyses L-glutamyl-tRNA(Gln) + L-glutamine + ATP + H2O = L-glutaminyl-tRNA(Gln) + L-glutamate + ADP + phosphate + H(+). Allows the formation of correctly charged Gln-tRNA(Gln) through the transamidation of misacylated Glu-tRNA(Gln) in organisms which lack glutaminyl-tRNA synthetase. The reaction takes place in the presence of glutamine and ATP through an activated gamma-phospho-Glu-tRNA(Gln). The GatDE system is specific for glutamate and does not act on aspartate. This chain is Glutamyl-tRNA(Gln) amidotransferase subunit D, found in Methanosarcina acetivorans (strain ATCC 35395 / DSM 2834 / JCM 12185 / C2A).